A 247-amino-acid chain; its full sequence is Triosephosphate isomerase (247 aa).

2 residues coordinate substrate: Asn10 and Lys12. His94 functions as the Electrophile in the catalytic mechanism. Glu164 serves as the catalytic Proton acceptor.

Belongs to the triosephosphate isomerase family. In terms of assembly, homodimer.

It catalyses the reaction D-glyceraldehyde 3-phosphate = dihydroxyacetone phosphate. Its pathway is carbohydrate biosynthesis; gluconeogenesis. It functions in the pathway carbohydrate degradation; glycolysis; D-glyceraldehyde 3-phosphate from glycerone phosphate: step 1/1. This is Triosephosphate isomerase (Tpi) from Drosophila simulans (Fruit fly).